Here is a 576-residue protein sequence, read N- to C-terminus: MVKKEKKANVSGKPKHSLDANRADGKKKTTETRSKSTVNRLKMYKTRPKRNAGGKILSNEYQSKELPNSRIAPDRRWFGNTRVVNQKELEYFREELQTKMSSNYNVILKERKLPMSLLTDNKKQSRVHLLDMEPFQDAFGRKTKRKRPKLVASDYEALVKKAAESQDAFEEKNGAGPSGEGGEEEDGFRDLVRHTMFEKGQSKRIWGELYKVIDSSDVIVQVIDARDPQGTRCHHLEKTLKEHHKHKHMILLLNKCDLVPAWATKGWLRVLSKEYPTLAFHASVNKSFGKGSLLSVLRQFARLKSDKQAISVGFVGYPNVGKSSVINTLRTKNVCKVAPIPGETKVWQYITLTKRIFLIDCPGVVYQSRDTETDIVLKGVVRVTNLEDASEHIGEVLRRVKKEHLQRAYKIKDWEDDHDFLLQLCKSSGKLLKGGEPDLMTGAKMILHDWQRGRIPFFVPPPKLDNVASESEVIVPGIDKEAIADNSQAAAALKAIAGIMSTQQQKDVPVQRDFYDEKDLKDDKKAKESTETDAENGTDAEEDEDAVSEDGVESDSDADEDAVSENDEEDESDSAE.

Disordered stretches follow at residues 1–61 and 166–186; these read MVKK…SNEY and QDAF…EEED. The segment covering 16 to 34 has biased composition (basic and acidic residues); sequence HSLDANRADGKKKTTETRS. Residues 42–52 are compositionally biased toward basic residues; the sequence is KMYKTRPKRNA. One can recognise a CP-type G domain in the interval 206 to 367; it reads WGELYKVIDS…LIDCPGVVYQ (162 aa). The short motif at 224–228 is the DARXP motif element; sequence DARDP. The tract at residues 254-257 is G4; it reads NKCD. 254 to 257 is a binding site for GTP; that stretch reads NKCD. A G5 region spans residues 283–285; that stretch reads SVN. Residues 316–323 form a G1 region; the sequence is GYPNVGKS. Position 319 to 324 (319 to 324) interacts with GTP; sequence NVGKSS. A G2 region spans residues 342–346; sequence GETKV. A G3 region spans residues 360-363; the sequence is DCPG. Glycine 363 lines the GTP pocket. Residues 502–576 form a disordered region; the sequence is TQQQKDVPVQ…DEEDESDSAE (75 aa). The segment covering 509 to 530 has biased composition (basic and acidic residues); it reads PVQRDFYDEKDLKDDKKAKEST. Residues 531–576 are compositionally biased toward acidic residues; that stretch reads ETDAENGTDAEEDEDAVSEDGVESDSDADEDAVSENDEEDESDSAE.

It belongs to the TRAFAC class YlqF/YawG GTPase family. RsgA subfamily. As to quaternary structure, interacts with the 60S ribosomal proteins RPL10AA, RPL10AB and RPL10AC. Ubiquitous, with higher levels in meristematic regions.

Its subcellular location is the nucleus. It localises to the nucleolus. Its activity is regulated as follows. The GTPase activity is stimulated in the presence of the 60S ribosomal subunit. In terms of biological role, GTPase involved in pre-60S ribosomal subunit maturation. This is Nuclear/nucleolar GTPase 2 from Arabidopsis thaliana (Mouse-ear cress).